The chain runs to 465 residues: UDP-N-acetylmuramate--L-alanine ligase (465 aa).

112–118 (GTHGKTT) lines the ATP pocket.

It belongs to the MurCDEF family.

Its subcellular location is the cytoplasm. The catalysed reaction is UDP-N-acetyl-alpha-D-muramate + L-alanine + ATP = UDP-N-acetyl-alpha-D-muramoyl-L-alanine + ADP + phosphate + H(+). Its pathway is cell wall biogenesis; peptidoglycan biosynthesis. Functionally, cell wall formation. This Burkholderia pseudomallei (strain 1106a) protein is UDP-N-acetylmuramate--L-alanine ligase.